The chain runs to 187 residues: PRA1 family protein G1 (187 aa).

The next 3 helical transmembrane spans lie at 84-104 (LFLI…AMWL), 125-145 (VIVF…NSLQ), and 146-166 (CLIL…IIRN).

It belongs to the PRA1 family. Expressed in roots and lateral roots.

It is found in the endosome membrane. In terms of biological role, may be involved in both secretory and endocytic intracellular trafficking in the endosomal/prevacuolar compartments. This Arabidopsis thaliana (Mouse-ear cress) protein is PRA1 family protein G1 (PRA1G1).